The sequence spans 132 residues: Small ribosomal subunit protein uS8 (132 aa).

Belongs to the universal ribosomal protein uS8 family. As to quaternary structure, part of the 30S ribosomal subunit. Contacts proteins S5 and S12.

Functionally, one of the primary rRNA binding proteins, it binds directly to 16S rRNA central domain where it helps coordinate assembly of the platform of the 30S subunit. This Parvibaculum lavamentivorans (strain DS-1 / DSM 13023 / NCIMB 13966) protein is Small ribosomal subunit protein uS8.